The chain runs to 304 residues: Ribonuclease Z (304 aa).

Zn(2+) is bound by residues histidine 63, histidine 65, aspartate 67, histidine 68, histidine 143, aspartate 213, and histidine 271. Residue aspartate 67 is the Proton acceptor of the active site.

It belongs to the RNase Z family. Homodimer. Zn(2+) serves as cofactor.

The enzyme catalyses Endonucleolytic cleavage of RNA, removing extra 3' nucleotides from tRNA precursor, generating 3' termini of tRNAs. A 3'-hydroxy group is left at the tRNA terminus and a 5'-phosphoryl group is left at the trailer molecule.. In terms of biological role, zinc phosphodiesterase, which displays some tRNA 3'-processing endonuclease activity. Probably involved in tRNA maturation, by removing a 3'-trailer from precursor tRNA. This is Ribonuclease Z from Porphyromonas gingivalis (strain ATCC BAA-308 / W83).